The following is a 72-amino-acid chain: V-type proton ATPase subunit e (72 aa).

Topologically, residues 1–2 (MS) are lumenal. A helical membrane pass occupies residues 3 to 23 (FYTVVATFLSVVLASAVFWVL). Residues 24-34 (APKENQTVWRS) lie on the Cytoplasmic side of the membrane. Residues 35–55 (TIILSMSMMFLMWAVTYLSQL) form a helical membrane-spanning segment. Residues 56 to 72 (HPLVVPRRSDLRPEFAE) lie on the Lumenal side of the membrane.

The protein belongs to the V-ATPase e1/e2 subunit family. In terms of assembly, V-ATPase is a heteromultimeric enzyme composed of a peripheral catalytic V1 complex (components A to H) attached to an integral membrane V0 proton pore complex (components: a, c, c', c'', d, e, f and VOA1).

The protein localises to the vacuole membrane. In terms of biological role, subunit of the V0 complex of vacuolar(H+)-ATPase (V-ATPase), a multisubunit enzyme composed of a peripheral complex (V1) that hydrolyzes ATP and a membrane integral complex (V0) that translocates protons. V-ATPase is responsible for acidifying and maintaining the pH of intracellular compartments. In Eremothecium gossypii (strain ATCC 10895 / CBS 109.51 / FGSC 9923 / NRRL Y-1056) (Yeast), this protein is V-type proton ATPase subunit e (VMA9).